Here is an 89-residue protein sequence, read N- to C-terminus: Cell division topological specificity factor (89 aa).

It belongs to the MinE family.

Its function is as follows. Prevents the cell division inhibition by proteins MinC and MinD at internal division sites while permitting inhibition at polar sites. This ensures cell division at the proper site by restricting the formation of a division septum at the midpoint of the long axis of the cell. In Photorhabdus laumondii subsp. laumondii (strain DSM 15139 / CIP 105565 / TT01) (Photorhabdus luminescens subsp. laumondii), this protein is Cell division topological specificity factor.